Reading from the N-terminus, the 859-residue chain is Suppressor protein MPT5 (859 aa).

The tract at residues 85-108 is disordered; the sequence is MNNTSTSNSANSFSPNPNAASNST. A compositionally biased stretch (low complexity) spans 86-108; the sequence is NNTSTSNSANSFSPNPNAASNST. The 409-residue stretch at 188-596 folds into the PUM-HD domain; that stretch reads DNSSFGLSSS…KIKLKVKAYA (409 aa). Pumilio repeat units follow at residues 209 to 247, 248 to 283, 284 to 320, 325 to 362, 363 to 400, 401 to 438, 439 to 474, and 503 to 539; these read PLRDLDYIKLATDQFGCRFLQKKLETPSESNMVRDLMYE, QIKPFFLDLILDPFGNYLVQKLCDYLTAEQKTLLIQ, TIYPNVFQISINQYGTRSLQKIIDTVDNEVQIDLIIK, EFTSIEQVVTLINDLNGNHVIQKCIFKFSPSKFGFIID, AIVEQNNIITISTHKHGCCVLQKLLSVCTLQQIFKISV, KIVQFLPGLINDQFGNYIIQFLLDIKELDFYLLAELFN, RLSNELCQLSCLKFSSNVVEKFIKKLFRIITGFIVN, and DIFTVNLNVLIRDNFGNYALQTLLDVKNYSPLLAYNK. A disordered region spans residues 620-658; that stretch reads TINNENKNPHNKNSHNHNHNHNHNHAHNNNNNNNQKSHT. Basic residues predominate over residues 628–645; that stretch reads PHNKNSHNHNHNHNHNHA. Phosphoserine occurs at positions 662, 834, and 838.

The protein resides in the cytoplasm. In terms of biological role, RNA-binding protein involved in post-transcriptional regulation. Negatively regulates expression of HO by binding to the 3'-UTR of HO mRNA. Predominantly binds to mRNAs encoding chromatin modifiers and spindle pole body components. Recognizes and binds to 5'-TGTAA[CT]A[AT]TA-3' in the 3'-UTR of target mRNAs. Multicopy suppressor of POP2 mutation. Required for high temperature growth. In Saccharomyces cerevisiae (strain ATCC 204508 / S288c) (Baker's yeast), this protein is Suppressor protein MPT5 (MPT5).